The primary structure comprises 487 residues: MTELFIDGAWVAGSGPVFASRNPGTDAVAWQGESASAADVDRAVASARRAFAGWSALDFEARCEIVKRFAALLTERKEAIATAIGRETGKPLWEARTEVASMAAKVGISIQAYQERTGEKRQDMADGVAVLRHRPHGVVAVFGPYNFPGHLPNGHIVPALIAGNTVVFKPSELAPGVARATVEVWQEAGLPAGVLNLVQGEKDTGIALANHRQIDGLFFTGSSDTGTLLHKQFGGRPEIVLALEMGGNNPLVIGEVEDIDAAVHHTIQSAFLSAGQRCTCARRIFVPQGAFGDRFLARFADVTSKITADVFDADPQPFMGAVISARAAAKLVDAQARLVEQGAKPIVAMAQRDPRLGFVNAAIVDVTGVANLPDEEHFGPLAQVVRYATFDEAIERANDTAFGLSAGLLADDAKVWEHFRRTIRAGIVNWNRPTNGASSAAPFGGTGRSGNHRPSAYYAADYCAYPMASVESTQLTLPASLSPGLHF.

Residue 221 to 226 participates in NAD(+) binding; it reads GSSDTG. Catalysis depends on residues Glu-244 and Cys-278.

The protein belongs to the aldehyde dehydrogenase family. AstD subfamily.

The enzyme catalyses N-succinyl-L-glutamate 5-semialdehyde + NAD(+) + H2O = N-succinyl-L-glutamate + NADH + 2 H(+). It participates in amino-acid degradation; L-arginine degradation via AST pathway; L-glutamate and succinate from L-arginine: step 4/5. Its function is as follows. Catalyzes the NAD-dependent reduction of succinylglutamate semialdehyde into succinylglutamate. This Burkholderia cenocepacia (strain HI2424) protein is N-succinylglutamate 5-semialdehyde dehydrogenase.